We begin with the raw amino-acid sequence, 215 residues long: Glutathione S-transferase D6 (215 aa).

The GST N-terminal domain maps to 1–80 (MDLYNMSGSP…YLVEQYGKDD (80 aa)). Residues serine 9, 50–52 (HTI), and 64–66 (ETR) contribute to the glutathione site. Residues 86–206 (DPQKQALINQ…LARIQSAKKF (121 aa)) enclose the GST C-terminal domain.

Belongs to the GST superfamily. Delta family. As to quaternary structure, homodimer.

It carries out the reaction RX + glutathione = an S-substituted glutathione + a halide anion + H(+). Conjugation of reduced glutathione to a wide number of exogenous and endogenous hydrophobic electrophiles. May be involved in detoxification. The chain is Glutathione S-transferase D6 from Drosophila melanogaster (Fruit fly).